The chain runs to 196 residues: Holliday junction branch migration complex subunit RuvA (196 aa).

Positions 1–63 (MYEYFKGIIS…EDAELLYGFA (63 aa)) are domain I. Residues 64–142 (TEEEKQLFLS…AAGSPAESKA (79 aa)) form a domain II region. A flexible linker region spans residues 143–146 (PVQT). Residues 147–196 (ADNQELEEAMEAMLALGYKAAELKKIKKFFEGTTDTAENYIKSALKMLVK) form a domain III region.

This sequence belongs to the RuvA family. As to quaternary structure, homotetramer. Forms an RuvA(8)-RuvB(12)-Holliday junction (HJ) complex. HJ DNA is sandwiched between 2 RuvA tetramers; dsDNA enters through RuvA and exits via RuvB. An RuvB hexamer assembles on each DNA strand where it exits the tetramer. Each RuvB hexamer is contacted by two RuvA subunits (via domain III) on 2 adjacent RuvB subunits; this complex drives branch migration. In the full resolvosome a probable DNA-RuvA(4)-RuvB(12)-RuvC(2) complex forms which resolves the HJ.

The protein resides in the cytoplasm. In terms of biological role, the RuvA-RuvB-RuvC complex processes Holliday junction (HJ) DNA during genetic recombination and DNA repair, while the RuvA-RuvB complex plays an important role in the rescue of blocked DNA replication forks via replication fork reversal (RFR). RuvA specifically binds to HJ cruciform DNA, conferring on it an open structure. The RuvB hexamer acts as an ATP-dependent pump, pulling dsDNA into and through the RuvAB complex. HJ branch migration allows RuvC to scan DNA until it finds its consensus sequence, where it cleaves and resolves the cruciform DNA. In Streptococcus sanguinis (strain SK36), this protein is Holliday junction branch migration complex subunit RuvA.